The primary structure comprises 886 residues: Conserved oligomeric Golgi complex subunit 1 (886 aa).

Basic and acidic residues predominate over residues 834–846 (SAERKSPIQEPVE). A disordered region spans residues 834–886 (SAERKSPIQEPVEKTATTTPTRKSGGNGARKGDSSKSKSSAASFFGMSQEWFR). Serine 839 carries the post-translational modification Phosphoserine. A compositionally biased stretch (polar residues) spans 848 to 857 (TATTTPTRKS).

The protein belongs to the COG1 family. In terms of assembly, component of the conserved oligomeric Golgi complex which is composed of eight different subunits and is required for normal Golgi morphology and localization.

Its subcellular location is the golgi apparatus membrane. Required for normal Golgi function. The sequence is that of Conserved oligomeric Golgi complex subunit 1 from Drosophila melanogaster (Fruit fly).